Reading from the N-terminus, the 535-residue chain is Dipeptide-binding protein (535 aa).

The signal sequence occupies residues 1-28; the sequence is MRISLKKSGMLKLGLSLVAMTVAASVQA. Cysteine 34 and cysteine 262 are disulfide-bonded. Glycyl-L-leucine is bound by residues 48-50, 383-385, and 433-436; these read TSG, RPY, and WTGD. Cysteine 450 and cysteine 463 are oxidised to a cystine.

This sequence belongs to the bacterial solute-binding protein 5 family. As to quaternary structure, the complex is composed of two ATP-binding proteins (DppD and DppF), two transmembrane proteins (DppB and DppC) and a solute-binding protein (DppA).

Its subcellular location is the periplasm. Heme binding is inhibited by dipeptide. Part of the ABC transporter DppABCDF involved in dipeptide transport. Binds dipeptides and accepts a wide range of side chains, including small neutral, bulky hydrophobic, and positively and negatively charged groups. Tripeptides are poor substrates. DppA alone controls the specificity of the Dpp transporter. In addition, plays a role in chemotaxis toward peptides via interaction with the chemotaxis protein Tap. Its function is as follows. Binds heme. When a foreign outer membrane heme receptor is expressed in E.coli, DppABCDF can also transport heme and its precursor, 5-aminolevulinic acid (ALA), from the periplasm into the cytoplasm. This is Dipeptide-binding protein from Escherichia coli (strain K12).